Here is a 575-residue protein sequence, read N- to C-terminus: Sulfite reductase [NADPH] hemoprotein beta-component (575 aa).

Residues cysteine 438, cysteine 444, cysteine 484, and cysteine 488 each contribute to the [4Fe-4S] cluster site. Cysteine 488 lines the siroheme pocket.

This sequence belongs to the nitrite and sulfite reductase 4Fe-4S domain family. Alpha(8)-beta(8). The alpha component is a flavoprotein, the beta component is a hemoprotein. It depends on siroheme as a cofactor. The cofactor is [4Fe-4S] cluster.

The enzyme catalyses hydrogen sulfide + 3 NADP(+) + 3 H2O = sulfite + 3 NADPH + 4 H(+). It functions in the pathway sulfur metabolism; hydrogen sulfide biosynthesis; hydrogen sulfide from sulfite (NADPH route): step 1/1. Component of the sulfite reductase complex that catalyzes the 6-electron reduction of sulfite to sulfide. This is one of several activities required for the biosynthesis of L-cysteine from sulfate. The protein is Sulfite reductase [NADPH] hemoprotein beta-component of Vibrio atlanticus (strain LGP32) (Vibrio splendidus (strain Mel32)).